The chain runs to 463 residues: Tryprostatin B synthase (463 aa).

Residues methionine 93 and glutamate 101 each coordinate brevianamide F. Dimethylallyl diphosphate is bound by residues arginine 112, lysine 200, and tyrosine 202. Tyrosine 204 serves as a coordination point for brevianamide F. The dimethylallyl diphosphate site is built by lysine 293, tyrosine 295, glutamine 379, tyrosine 381, tyrosine 445, and tyrosine 449.

It belongs to the tryptophan dimethylallyltransferase family.

It carries out the reaction brevianamide F + dimethylallyl diphosphate = tryprostatin B + diphosphate. It functions in the pathway mycotoxin biosynthesis. In terms of biological role, brevianamide F prenyltransferase; part of the gene cluster that mediates the biosynthesis of fumitremorgins, indole alkaloids that carry not only intriguing chemical structures, but also interesting biological and pharmacological activities. The biosynthesis of fumitremorgin-type alkaloids begins by condensation of the two amino acids L-tryptophan and L-proline to brevianamide F, catalyzed by the non-ribosomal peptide synthetase ftmPS/ftmA. Brevianamide F is then prenylated by the prenyltransferase ftmPT1/ftmB in the presence of dimethylallyl diphosphate, resulting in the formation of tryprostatin B. The three cytochrome P450 monooxygenases, ftmP450-1/ftmC, ftmP450-2/ftmE and ftmP450-3/FtmG, are responsible for the conversion of tryprostatin B to 6-hydroxytryprostatin B, tryprostatin A to fumitremorgin C and fumitremorgin C to 12,13-dihydroxyfumitremorgin C, respectively. The putative methyltransferase ftmMT/ftmD is expected for the conversion of 6-hydroxytryprostatin B to tryprostatin A. FtmPT2/FtmH catalyzes the prenylation of 12,13-dihydroxyfumitre-morgin C in the presence of dimethylallyl diphosphate, resulting in the formation of fumitremorgin B. Fumitremorgin B is further converted to verruculogen by ftmOx1/ftmF via the insertion of an endoperoxide bond between the two prenyl moieties. Finally, verruculogen is further converted to fumitremorgin A by the verruculogen prenyltransferase ftmPT3. The sequence is that of Tryprostatin B synthase from Neosartorya fischeri (strain ATCC 1020 / DSM 3700 / CBS 544.65 / FGSC A1164 / JCM 1740 / NRRL 181 / WB 181) (Aspergillus fischerianus).